The chain runs to 111 residues: Glutaredoxin-C2 (111 aa).

One can recognise a Glutaredoxin domain in the interval 3–103 (MQKAKEIVNS…PLLTEAGAIA (101 aa)). Cys-23 and Cys-26 are joined by a disulfide.

It belongs to the glutaredoxin family. CPYC subfamily.

Its subcellular location is the cytoplasm. Its function is as follows. Has a glutathione-disulfide oxidoreductase activity in the presence of NADPH and glutathione reductase. Reduces low molecular weight disulfides and proteins. This chain is Glutaredoxin-C2 (GRXC2), found in Arabidopsis thaliana (Mouse-ear cress).